The chain runs to 159 residues: MSRRKLSKKRIFKKDPFYNNELIQIIINRIMKKGNKALARKIIYRSLKDIELVTKQDPIKIVEQAVSNVTPFVEIRSRRLGGSTTQIPVFINNERGVTLAIRWLFQASKNKAGNKYSIIKRLSSEIVNASNGMGEAIKKRDEMHRMAEANKTIVKYNVL.

The protein belongs to the universal ribosomal protein uS7 family. As to quaternary structure, part of the 30S ribosomal subunit.

It is found in the plastid. The protein resides in the chloroplast. Functionally, one of the primary rRNA binding proteins, it binds directly to 16S rRNA where it nucleates assembly of the head domain of the 30S subunit. This Bigelowiella natans (Pedinomonas minutissima) protein is Small ribosomal subunit protein uS7c (rps7).